Consider the following 126-residue polypeptide: Nuclear transport factor 2B (126 aa).

Position 2 is an N-acetylserine (Ser-2). An NTF2 domain is found at 9-123; the sequence is VSKAFVEHYY…FYVFNDIFRL (115 aa).

Interacts with RAN1. Expressed in roots, stems, leaves and flowers, and, at low levels, in siliques.

The protein localises to the cytoplasm. It localises to the nucleus. The protein resides in the nucleus envelope. Facilitates protein transport into the nucleus. Interacts with various nucleoporins and with Ran-GDP. Could be part of a multicomponent system of cytosolic factors that assemble at the pore complex during nuclear import. The chain is Nuclear transport factor 2B from Arabidopsis thaliana (Mouse-ear cress).